The following is a 307-amino-acid chain: Methionyl-tRNA formyltransferase (307 aa).

108–111 (SLLP) contacts (6S)-5,6,7,8-tetrahydrofolate.

The protein belongs to the Fmt family.

It carries out the reaction L-methionyl-tRNA(fMet) + (6R)-10-formyltetrahydrofolate = N-formyl-L-methionyl-tRNA(fMet) + (6S)-5,6,7,8-tetrahydrofolate + H(+). Functionally, attaches a formyl group to the free amino group of methionyl-tRNA(fMet). The formyl group appears to play a dual role in the initiator identity of N-formylmethionyl-tRNA by promoting its recognition by IF2 and preventing the misappropriation of this tRNA by the elongation apparatus. This is Methionyl-tRNA formyltransferase from Xanthomonas axonopodis pv. citri (strain 306).